The following is a 156-amino-acid chain: Small ribosomal subunit protein uS7 (156 aa).

The protein belongs to the universal ribosomal protein uS7 family. As to quaternary structure, part of the 30S ribosomal subunit. Contacts proteins S9 and S11.

Its function is as follows. One of the primary rRNA binding proteins, it binds directly to 16S rRNA where it nucleates assembly of the head domain of the 30S subunit. Is located at the subunit interface close to the decoding center, probably blocks exit of the E-site tRNA. The polypeptide is Small ribosomal subunit protein uS7 (Mycoplasmopsis agalactiae (strain NCTC 10123 / CIP 59.7 / PG2) (Mycoplasma agalactiae)).